Consider the following 226-residue polypeptide: PKHD-type hydroxylase PputW619_4316 (226 aa).

The 101-residue stretch at 78–178 (KVFPPLINCY…RYAAFFWTQS (101 aa)) folds into the Fe2OG dioxygenase domain. Residues His-96, Asp-98, and His-159 each coordinate Fe cation. Arg-169 is a 2-oxoglutarate binding site.

It depends on Fe(2+) as a cofactor. The cofactor is L-ascorbate.

The chain is PKHD-type hydroxylase PputW619_4316 from Pseudomonas putida (strain W619).